The chain runs to 397 residues: Tryptophan synthase beta chain 1 (397 aa).

Lys-90 bears the N6-(pyridoxal phosphate)lysine mark.

The protein belongs to the TrpB family. Tetramer of two alpha and two beta chains. Requires pyridoxal 5'-phosphate as cofactor.

It catalyses the reaction (1S,2R)-1-C-(indol-3-yl)glycerol 3-phosphate + L-serine = D-glyceraldehyde 3-phosphate + L-tryptophan + H2O. Its pathway is amino-acid biosynthesis; L-tryptophan biosynthesis; L-tryptophan from chorismate: step 5/5. In terms of biological role, the beta subunit is responsible for the synthesis of L-tryptophan from indole and L-serine. This Aquifex aeolicus (strain VF5) protein is Tryptophan synthase beta chain 1 (trpB1).